The following is a 792-amino-acid chain: G-type lectin S-receptor-like serine/threonine-protein kinase At1g61440 (792 aa).

A signal peptide spans 1–17 (MGKKRIVLLLFISFSYA). The 120-residue stretch at 18–137 (EITKESPLSI…VTGRTLWESF (120 aa)) folds into the Bulb-type lectin domain. The Extracellular segment spans residues 18–419 (EITKESPLSI…ELDVHKRKMT (402 aa)). Asparagine 46, asparagine 127, and asparagine 229 each carry an N-linked (GlcNAc...) asparagine glycan. Residues 271-307 (PANSCDIYGVCGPFGFCVISDPPKCKCFKGFVPKSIE) enclose the EGF-like; atypical domain. 2 disulfide bridges follow: cysteine 275–cysteine 287 and cysteine 281–cysteine 295. Asparagine 313, asparagine 329, and asparagine 368 each carry an N-linked (GlcNAc...) asparagine glycan. One can recognise a PAN domain in the interval 326–408 (CQGNSTGKDA…GEILSIRLAH (83 aa)). Disulfide bonds link cysteine 361-cysteine 382 and cysteine 365-cysteine 371. A helical membrane pass occupies residues 420–440 (IVASTVSLTLFVILGFATFGF). The Cytoplasmic portion of the chain corresponds to 441–792 (WRNRVKHHDA…EMTESVILGR (352 aa)). A Protein kinase domain is found at 478 to 763 (FSLSNKLGHG…DLPLPKQPTF (286 aa)). ATP contacts are provided by residues 484-492 (LGHGGFGSV) and lysine 506. Phosphoserine occurs at positions 512 and 527. The interval 567–584 (RKRLELDWPKRFDIIQGI) is caM-binding. Aspartate 603 functions as the Proton acceptor in the catalytic mechanism. Serine 607 and serine 620 each carry phosphoserine. Threonine 637 is subject to Phosphothreonine. Residues serine 680 and serine 774 each carry the phosphoserine modification.

The protein belongs to the protein kinase superfamily. Ser/Thr protein kinase family.

Its subcellular location is the cell membrane. The catalysed reaction is L-seryl-[protein] + ATP = O-phospho-L-seryl-[protein] + ADP + H(+). It carries out the reaction L-threonyl-[protein] + ATP = O-phospho-L-threonyl-[protein] + ADP + H(+). This chain is G-type lectin S-receptor-like serine/threonine-protein kinase At1g61440, found in Arabidopsis thaliana (Mouse-ear cress).